Reading from the N-terminus, the 184-residue chain is Ribosome-recycling factor (184 aa).

Belongs to the RRF family.

It is found in the cytoplasm. In terms of biological role, responsible for the release of ribosomes from messenger RNA at the termination of protein biosynthesis. May increase the efficiency of translation by recycling ribosomes from one round of translation to another. This chain is Ribosome-recycling factor, found in Acholeplasma laidlawii (strain PG-8A).